The sequence spans 343 residues: Protein RecA (343 aa).

Position 66–73 (66–73) interacts with ATP; the sequence is GPESSGKT.

Belongs to the RecA family.

It localises to the cytoplasm. Functionally, can catalyze the hydrolysis of ATP in the presence of single-stranded DNA, the ATP-dependent uptake of single-stranded DNA by duplex DNA, and the ATP-dependent hybridization of homologous single-stranded DNAs. It interacts with LexA causing its activation and leading to its autocatalytic cleavage. This is Protein RecA from Rickettsia bellii (strain RML369-C).